Consider the following 121-residue polypeptide: MDNQFQSSKPIYLQIADQIFYRLVRKELLPGDKLPSVREMAIQTKVNPNTIQRTYSEMERLGIVETRRGQGTFIAEKAEIVDELKDKLTREVLEGFVKQMKELGLTKEEMLEGIKTFTEGG.

Positions 9 to 77 (KPIYLQIADQ…RGQGTFIAEK (69 aa)) constitute an HTH gntR-type domain. The H-T-H motif DNA-binding region spans 37-56 (VREMAIQTKVNPNTIQRTYS).

This is an uncharacterized protein from Bacillus subtilis (strain 168).